A 431-amino-acid chain; its full sequence is Glutamate-1-semialdehyde 2,1-aminomutase (431 aa).

At lysine 269 the chain carries N6-(pyridoxal phosphate)lysine.

This sequence belongs to the class-III pyridoxal-phosphate-dependent aminotransferase family. HemL subfamily. In terms of assembly, homodimer. Pyridoxal 5'-phosphate serves as cofactor.

It localises to the cytoplasm. It carries out the reaction (S)-4-amino-5-oxopentanoate = 5-aminolevulinate. It participates in porphyrin-containing compound metabolism; protoporphyrin-IX biosynthesis; 5-aminolevulinate from L-glutamyl-tRNA(Glu): step 2/2. The sequence is that of Glutamate-1-semialdehyde 2,1-aminomutase from Francisella tularensis subsp. tularensis (strain SCHU S4 / Schu 4).